Consider the following 217-residue polypeptide: Ribonuclease T (217 aa).

In terms of domain architecture, Exonuclease spans 20-195 (VVVDVETAGL…YDTERTAMLF (176 aa)). Mg(2+)-binding residues include Asp23, Glu25, His182, and Asp187. Residue His182 is the Proton donor/acceptor of the active site.

This sequence belongs to the RNase T family. Homodimer. Mg(2+) is required as a cofactor.

Trims short 3' overhangs of a variety of RNA species, leaving a one or two nucleotide 3' overhang. Responsible for the end-turnover of tRNA: specifically removes the terminal AMP residue from uncharged tRNA (tRNA-C-C-A). Also appears to be involved in tRNA biosynthesis. The chain is Ribonuclease T from Blochmanniella pennsylvanica (strain BPEN).